We begin with the raw amino-acid sequence, 110 residues long: MAKHHPDLIMCRKQPGIAIGRLCEKCDGKCVICDSYVRPCTLVRICDECNYGSFQGRCVICGGVGISDAYYCKECTQQEKDRDGCPKIVNLGSAKTDLFYERKKYGFKKR.

Belongs to the PHF5 family.

The polypeptide is PHD finger-like domain-containing protein 5B (Arabidopsis thaliana (Mouse-ear cress)).